The sequence spans 334 residues: MKLDEIARLAGVSRTTASYVINGKAKQYRVSDKTVEKVMAVVREHNYHPNAVAAGLRAGRTRSIGLVIPDLENTSYTRIANYLERQARQRGYQLLIACSEDQPDNEMRCIEHLLQRQVDAIIVSTSLPPEHPFYQRWANDPFPIVALDRALDREHFTSVVGADQDDAEMLAEELRKFPAETVLYLGALPELSVSFLREQGFRTAWKDDPREVNFLYANSYEREAAAQLFEKWLETHPMPQALFTTSFALLQGVMDVTLRRDGKLPSDLAIATFGDHELLDFLQCPVLAVAQRHRDVAERVLEIVLASLDEPRKPKPGLTRIRRNLYRRGILSRS.

Residues 1-58 (MKLDEIARLAGVSRTTASYVINGKAKQYRVSDKTVEKVMAVVREHNYHPNAVAAGLRA) enclose the HTH lacI-type domain. Residues 3–22 (LDEIARLAGVSRTTASYVIN) constitute a DNA-binding region (H-T-H motif).

Homotetramer.

In terms of biological role, global transcriptional regulator, which plays an important role in the regulation of carbon metabolism. The sequence is that of Catabolite repressor/activator (cra) from Salmonella typhimurium (strain LT2 / SGSC1412 / ATCC 700720).